The chain runs to 195 residues: Recombination protein RecR (195 aa).

A C4-type zinc finger spans residues 53-68 (CPVCFNIDVKSPCSIC). Residues 76 to 171 (QLLCIVEELG…KVTRLACGIP (96 aa)) enclose the Toprim domain.

The protein belongs to the RecR family.

In terms of biological role, may play a role in DNA repair. It seems to be involved in an RecBC-independent recombinational process of DNA repair. It may act with RecF and RecO. The protein is Recombination protein RecR of Ehrlichia chaffeensis (strain ATCC CRL-10679 / Arkansas).